The primary structure comprises 344 residues: Sorting nexin-16 (344 aa).

Over residues 1 to 10 (MATPYVPVPM) the composition is skewed to pro residues. Disordered stretches follow at residues 1 to 66 (MATP…NTSS) and 81 to 107 (ASSI…EDRP). Over residues 14–26 (NSASSFTTNRNQR) the composition is skewed to polar residues. Residues 27-40 (SSSFGSVSTSSNSS) show a composition bias toward low complexity. Over residues 41-66 (KGQLEDSNMGNFKQTSVPDQMDNTSS) the composition is skewed to polar residues. In terms of domain architecture, PX spans 105-218 (DRPSTPTILG…EFLCLDDPPG (114 aa)). A 1,2-diacyl-sn-glycero-3-phospho-(1D-myo-inositol-3-phosphate) contacts are provided by Arg-144, Thr-146, and Arg-184. At Ser-222 the chain carries Phosphoserine. The stretch at 223-278 (LEESRAFCETLEETNYRLQKELLEKQKEMESLKKLLSEKQLHIDTLENRIRTLSLE) forms a coiled coil.

It belongs to the sorting nexin family. Homooligomer. Interacts with EGFR. Detected in placenta, lung, liver,heart and pancreas.

The protein resides in the early endosome membrane. It localises to the late endosome membrane. The protein localises to the cytoplasm. Its subcellular location is the lysosome. In terms of biological role, may be involved in several stages of intracellular trafficking. Plays a role in protein transport from early to late endosomes. Plays a role in protein transport to the lysosome. Promotes degradation of EGFR after EGF signaling. Plays a role in intracellular transport of vesicular stomatitis virus nucleocapsids from the endosome to the cytoplasm. In Homo sapiens (Human), this protein is Sorting nexin-16 (SNX16).